Reading from the N-terminus, the 100-residue chain is Glyceraldehyde-3-phosphate dehydrogenase, testis-specific (100 aa).

The NAD(+) site is built by D39 and T64. R89 provides a ligand contact to D-glyceraldehyde 3-phosphate.

The protein belongs to the glyceraldehyde-3-phosphate dehydrogenase family. In terms of assembly, homotetramer.

The protein localises to the cytoplasm. The catalysed reaction is D-glyceraldehyde 3-phosphate + phosphate + NAD(+) = (2R)-3-phospho-glyceroyl phosphate + NADH + H(+). The protein operates within carbohydrate degradation; glycolysis; pyruvate from D-glyceraldehyde 3-phosphate: step 1/5. Its function is as follows. May play an important role in regulating the switch between different pathways for energy production during spermiogenesis and in the spermatozoon. Required for sperm motility and male fertility. The protein is Glyceraldehyde-3-phosphate dehydrogenase, testis-specific of Mesocricetus auratus (Golden hamster).